Consider the following 234-residue polypeptide: Small ribosomal subunit protein uS3 (234 aa).

The KH type-2 domain occupies 39–108; sequence IRKFVKKKLF…TVIVNVVEVK (70 aa). Residues 212–234 form a disordered region; sequence KGKNEETNNETADNSRGRRREAK.

Belongs to the universal ribosomal protein uS3 family. Part of the 30S ribosomal subunit. Forms a tight complex with proteins S10 and S14.

Binds the lower part of the 30S subunit head. Binds mRNA in the 70S ribosome, positioning it for translation. The chain is Small ribosomal subunit protein uS3 from Alkaliphilus metalliredigens (strain QYMF).